Consider the following 479-residue polypeptide: Adenosylhomocysteinase (479 aa).

T66, D142, and E203 together coordinate substrate. Residue 204-206 (TTT) participates in NAD(+) binding. The substrate site is built by K233 and D237. Residues N238, 267 to 272 (GYGDVG), E290, N325, 346 to 348 (IGH), and N394 each bind NAD(+).

This sequence belongs to the adenosylhomocysteinase family. NAD(+) is required as a cofactor.

The protein localises to the cytoplasm. The catalysed reaction is S-adenosyl-L-homocysteine + H2O = L-homocysteine + adenosine. The protein operates within amino-acid biosynthesis; L-homocysteine biosynthesis; L-homocysteine from S-adenosyl-L-homocysteine: step 1/1. Functionally, may play a key role in the regulation of the intracellular concentration of adenosylhomocysteine. The chain is Adenosylhomocysteinase from Nitratidesulfovibrio vulgaris (strain ATCC 29579 / DSM 644 / CCUG 34227 / NCIMB 8303 / VKM B-1760 / Hildenborough) (Desulfovibrio vulgaris).